The sequence spans 221 residues: Glutathione S-transferase alpha-3 (221 aa).

The GST N-terminal domain occupies 3–83 (GKPVLHYFDG…YIATKYNLYG (81 aa)). Position 4 is an N6-succinyllysine (K4). Glutathione is bound by residues Y9, R45, 54 to 55 (QV), and 67 to 68 (QT). Positions 85 to 207 (DMKERALIDM…LQPGSQRKPL (123 aa)) constitute a GST C-terminal domain.

This sequence belongs to the GST superfamily. Alpha family. Heterodimer of YC1 and YC2.

The protein localises to the cytoplasm. It carries out the reaction RX + glutathione = an S-substituted glutathione + a halide anion + H(+). The catalysed reaction is androst-5-ene-3,17-dione = androst-4-ene-3,17-dione. It catalyses the reaction pregn-5-ene-3,20-dione = progesterone. Functionally, conjugation of reduced glutathione to a wide number of exogenous and endogenous hydrophobic electrophiles. Catalyzes isomerization reactions that contribute to the biosynthesis of steroid hormones. Efficiently catalyze obligatory double-bond isomerizations of delta(5)-androstene-3,17-dione and delta(5)-pregnene-3,20-dione, precursors to testosterone and progesterone, respectively. Has substantial activity toward aflatoxin B1-8,9-epoxide. The protein is Glutathione S-transferase alpha-3 of Rattus norvegicus (Rat).